The sequence spans 190 residues: Molybdenum cofactor guanylyltransferase (190 aa).

Residues Leu-8–Gly-10, Lys-20, Asp-64, and Asp-98 each bind GTP. Asp-98 serves as a coordination point for Mg(2+).

The protein belongs to the MobA family. Monomer. Mg(2+) serves as cofactor.

It localises to the cytoplasm. The catalysed reaction is Mo-molybdopterin + GTP + H(+) = Mo-molybdopterin guanine dinucleotide + diphosphate. Its function is as follows. Transfers a GMP moiety from GTP to Mo-molybdopterin (Mo-MPT) cofactor (Moco or molybdenum cofactor) to form Mo-molybdopterin guanine dinucleotide (Mo-MGD) cofactor. The protein is Molybdenum cofactor guanylyltransferase of Rhodobacter capsulatus (Rhodopseudomonas capsulata).